A 169-amino-acid polypeptide reads, in one-letter code: Hydroperoxy fatty acid reductase gpx1 (169 aa).

The active site involves cysteine 41.

It belongs to the glutathione peroxidase family. Monomer.

The enzyme catalyses a hydroperoxy polyunsaturated fatty acid + NADPH + H(+) = a hydroxy polyunsaturated fatty acid + NADP(+) + H2O. With respect to regulation, mercaptosuccinate, pCMB, and nethylmaleimide act as inhibitors of the catalytic activity. Functionally, hydroperoxy fatty acid reductase essential for the removal of lipid hydroperoxides under normal and stress conditions, leading to the protection of membrane integrity. The sequence is that of Hydroperoxy fatty acid reductase gpx1 (gpx1) from Synechocystis sp. (strain ATCC 27184 / PCC 6803 / Kazusa).